The following is a 480-amino-acid chain: MNKLTSSYSPVHVIGGGLAGSEAAWQIAEAGVPVILHEMRGVRGTDAHKTDSLAELVCSNSFRSDDATSNAVGVLHAEMRLAGSIIMRCADLNQVPAGGALAVDREGFAEAVSAAIAAHPLITVLREEIRGLPPKEWDLAIIATGPLTAPDLADAIRAETGADALAFFDAIAPIVHADTIDMDICWHQSRYDKVGPGGTGKDYINCPLTQEEYNAFIDALIAGDKTGFKEWEGTPYFDGCLPIEVMAERGRETLRHGPMKPMGLTNAHNPSVKPYAVVQLRQDNALGTLYNMVGFQTKLKYGAQGEVFRMIPGLEKAEFARLGGLHRNTYINSPTLLDQSLTLKSRAGLRFAGQITGCEGYVESASIGLLAGRFAAAERKGASPAIPPVTTAFGALLNHITGGHIVSDDEPGKRSFQPMNVNFGLFPPLDPGALTRPEGAKRFRGKEKASAKKQAMASRALSDCATWLDKNLLIGGAATR.

15–20 (GGGLAG) is an FAD binding site.

Belongs to the MnmG family. TrmFO subfamily. FAD is required as a cofactor.

The protein resides in the cytoplasm. The enzyme catalyses uridine(54) in tRNA + (6R)-5,10-methylene-5,6,7,8-tetrahydrofolate + NADH + H(+) = 5-methyluridine(54) in tRNA + (6S)-5,6,7,8-tetrahydrofolate + NAD(+). The catalysed reaction is uridine(54) in tRNA + (6R)-5,10-methylene-5,6,7,8-tetrahydrofolate + NADPH + H(+) = 5-methyluridine(54) in tRNA + (6S)-5,6,7,8-tetrahydrofolate + NADP(+). Functionally, catalyzes the folate-dependent formation of 5-methyl-uridine at position 54 (M-5-U54) in all tRNAs. The protein is Methylenetetrahydrofolate--tRNA-(uracil-5-)-methyltransferase TrmFO of Sinorhizobium medicae (strain WSM419) (Ensifer medicae).